Consider the following 248-residue polypeptide: tRNA pseudouridine synthase A (248 aa).

D53 serves as the catalytic Nucleophile. Residue Y116 coordinates substrate.

This sequence belongs to the tRNA pseudouridine synthase TruA family. As to quaternary structure, homodimer.

It carries out the reaction uridine(38/39/40) in tRNA = pseudouridine(38/39/40) in tRNA. Functionally, formation of pseudouridine at positions 38, 39 and 40 in the anticodon stem and loop of transfer RNAs. This chain is tRNA pseudouridine synthase A, found in Helicobacter hepaticus (strain ATCC 51449 / 3B1).